A 644-amino-acid polypeptide reads, in one-letter code: MFQDNPLLAQLKQQLHSQTPRAEGVVKATEKGFGFLEVDAQKSYFIPPPQMKKVMHGDRIIAVIHSEKERESAEPEELVEPFLTRFVGKVQGKNDRLAIVPDHPLLKDAIPCRAARGLNHEFKEGDWAVAEMRRHPLKGDRSFYAELTQYITFGDDHFVPWWVTLARHNLEKEAPDGVATEMLDEGLVREDLTALDFVTIDSASTEDMDDALFAKALPDDKLQLIVAIADPTAWIAEGSKLDKAAKIRAFTNYLPGFNIPMLPRELSDDLCSLRANEVRPVLACRMTLSADGTIEDNIEFFAATIESKAKLVYDQVSDWLENTGDWQPESEAIAEQVRLLAQICQRRGEWRHNHALVFKDRPDYRFILGEKGEVLDIVAEPRRIANRIVEEAMIAANICAARVLRDKLGFGIYNVHMGFDPANADALAALLKTHGLHVDAEEVLTLDGFCKLRRELDAQPTGFLDSRIRRFQSFAEISTEPGPHFGLGLEAYATWTSPIRKYGDMINHRLLKAVIKGETATRPQDEITVQMAERRRLNRMAERDVGDWLYARFLKDKAGTDTRFAAEIVDISRGGMRVRLVDNGAIAFIPAPFLHAVRDELVCSQENGTVQIKGETVYKVTDVIDVTIAEVRMETRSIIARPVA.

Residues 189 to 516 (REDLTALDFV…NHRLLKAVIK (328 aa)) enclose the RNB domain. The S1 motif domain occupies 561–643 (DTRFAAEIVD…ETRSIIARPV (83 aa)).

It belongs to the RNR ribonuclease family. RNase II subfamily.

It is found in the cytoplasm. The catalysed reaction is Exonucleolytic cleavage in the 3'- to 5'-direction to yield nucleoside 5'-phosphates.. Involved in mRNA degradation. Hydrolyzes single-stranded polyribonucleotides processively in the 3' to 5' direction. The protein is Exoribonuclease 2 of Escherichia coli O139:H28 (strain E24377A / ETEC).